The sequence spans 504 residues: Peroxisome proliferator-activated receptor gamma (504 aa).

Residue serine 111 is modified to Phosphoserine; by MAPK. A DNA-binding region (nuclear receptor) is located at residues 135–209 (AIECRVCGDK…VGMSHNAIRF (75 aa)). NR C4-type zinc fingers lie at residues 138-158 (CRVCGDKASGFHYGVHACEGC) and 175-197 (CDLNCRIHKKSRNKCQYCRFQKC). The interaction with FAM120B stretch occupies residues 204 to 279 (HNAIRFGRMP…DKSPFVIYDM (76 aa)). The region spanning 237–502 (DLRALAKHLY…HPLLQEIYKD (266 aa)) is the NR LBD domain. Lysine 251 participates in a covalent cross-link: Glycyl lysine isopeptide (Lys-Gly) (interchain with G-Cter in ubiquitin). The 9aaTAD signature appears at 494–502 (PLLQEIYKD).

The protein belongs to the nuclear hormone receptor family. NR1 subfamily. As to quaternary structure, interacts with FOXO1 (acetylated form). Heterodimer with other nuclear receptors, such as RXRA. The heterodimer with the retinoic acid receptor RXRA is called adipocyte-specific transcription factor ARF6. Interacts with NCOA6 coactivator, leading to a strong increase in transcription of target genes. Interacts with coactivator PPARBP, leading to a mild increase in transcription of target genes. Interacts with NOCA7 in a ligand-inducible manner. Interacts with NCOA1 and NCOA2 LXXLL motifs. Interacts with ASXL1, ASXL2, DNTTIP2, FAM120B, MAP2K1/MEK1, NR0B2, PDPK1, PRDM16, PRMT2 and TGFB1I1. Interacts (when activated by agonist) with PPP5C. Interacts with HELZ2 and THRAP3; the interaction stimulates the transcriptional activity of PPARG. Interacts with PER2, the interaction is ligand dependent and blocks PPARG recruitment to target promoters. Interacts with NOCT. Interacts with ACTN4. Interacts (when in the liganded conformation) with GPS2. Interacts with CRY1 and CRY2 in a ligand-dependent manner. In the absence of hormonal ligand, interacts with TACC1. In macrophages, interacts with PAQR3 and STUB1; the interactions promote PPARG poylubiquitination and STUB1-mediated degradation. Phosphorylated at basal conditions and dephosphorylated when treated with the ligand. May be dephosphorylated by PPP5C. The phosphorylated form may be inactive and dephosphorylation induces adipogenic activity. In terms of processing, ubiquitinated by E3 ubiquitin-protein ligase complex containing FBXO9; leading to proteasomal degradation. Ubiquitinated at Lys-251 by TRIM55 leading to proteasomal degradation. Ubiquitinated by E3 ubiquitin-protein ligase STUB1/CHIP; leading to proteasomal degradation. As to expression, highest expression in adipose tissue and lower in spleen. Very low levels in kidney, intestine, lung and muscle.

Its subcellular location is the nucleus. It localises to the cytoplasm. Its activity is regulated as follows. PDPK1 activates its transcriptional activity independently of its kinase activity. In terms of biological role, nuclear receptor that binds peroxisome proliferators such as hypolipidemic drugs and fatty acids. Once activated by a ligand, the nuclear receptor binds to DNA specific PPAR response elements (PPRE) and modulates the transcription of its target genes, such as acyl-CoA oxidase. It therefore controls the peroxisomal beta-oxidation pathway of fatty acids. Key regulator of adipocyte differentiation and glucose homeostasis. ARF6 acts as a key regulator of the tissue-specific adipocyte P2 (aP2) enhancer. Acts as a critical regulator of gut homeostasis by suppressing NF-kappa-B-mediated pro-inflammatory responses. Plays a role in the regulation of cardiovascular circadian rhythms by regulating the transcription of BMAL1 in the blood vessels. This is Peroxisome proliferator-activated receptor gamma (PPARG) from Sus scrofa (Pig).